We begin with the raw amino-acid sequence, 316 residues long: Vacuolar membrane protein YNL058C (316 aa).

Residues 32–60 form a disordered region; the sequence is KPTSSVVSETSSKSLPSLTSSAFSTSSGA. A helical transmembrane segment spans residues 93-113; the sequence is VYIAVGAVIGAIFISILIWWL. Serine 148, serine 256, and serine 276 each carry phosphoserine. The tract at residues 240-304 is disordered; sequence EEEERKLNLN…KAHKRQAPSM (65 aa). Residues 256–271 are compositionally biased toward basic and acidic residues; the sequence is SPERKEKKINSMEGYH.

The protein belongs to the PRM5 family.

It localises to the vacuole membrane. In Saccharomyces cerevisiae (strain ATCC 204508 / S288c) (Baker's yeast), this protein is Vacuolar membrane protein YNL058C.